We begin with the raw amino-acid sequence, 164 residues long: 4-hydroxy-4-methyl-2-oxoglutarate aldolase (164 aa).

Substrate contacts are provided by residues 74–77 and Arg-96; that span reads GGNL. Residue Asp-97 participates in a divalent metal cation binding.

It belongs to the class II aldolase/RraA-like family. As to quaternary structure, homotrimer. It depends on Ni(2+) as a cofactor. Requires Co(2+) as cofactor. Zn(2+) serves as cofactor.

The catalysed reaction is 4-hydroxy-4-methyl-2-oxoglutarate = 2 pyruvate. It carries out the reaction oxaloacetate + H(+) = pyruvate + CO2. Competitively inhibited by oxalate, a pyruvate enolate analog. Its function is as follows. Catalyzes the aldol cleavage of 4-hydroxy-4-methyl-2-oxoglutarate (HMG) into 2 molecules of pyruvate. Also contains a secondary oxaloacetate (OAA) decarboxylase activity due to the common pyruvate enolate transition state formed following C-C bond cleavage in the retro-aldol and decarboxylation reactions. This chain is 4-hydroxy-4-methyl-2-oxoglutarate aldolase, found in Thermus thermophilus (strain ATCC 27634 / DSM 579 / HB8).